Reading from the N-terminus, the 211-residue chain is MTYYGVLFVEKCTPSTITQLQDVLSTDLISMGDKWSFELKTFRTSAKNTDPNDTKVMHTVQLSHKNNETVTIKNQSAIITPTYVTKALYDNGCVFGTPEPFDYMLSNKLSNIWTQRQSIKGEFGVSYQTADLSIRVNNAFSYSGFQGLILELESKSSDNLEAFEKNVERVRTMLSGMGLSDVRVSSDKSQGSKQEDSSLFDLAAHYLKVLG.

This sequence belongs to the Mediator complex subunit 20 family. Component of the Mediator complex.

The protein resides in the nucleus. Its function is as follows. Component of the Mediator complex, a coactivator involved in the regulated transcription of nearly all RNA polymerase II-dependent genes. Mediator functions as a bridge to convey information from gene-specific regulatory proteins to the basal RNA polymerase II transcription machinery. Mediator is recruited to promoters by direct interactions with regulatory proteins and serves as a scaffold for the assembly of a functional preinitiation complex with RNA polymerase II and the general transcription factors. This is Mediator of RNA polymerase II transcription subunit 20 (SRB2) from Kluyveromyces lactis (strain ATCC 8585 / CBS 2359 / DSM 70799 / NBRC 1267 / NRRL Y-1140 / WM37) (Yeast).